The primary structure comprises 248 residues: Uridylate kinase (248 aa).

ATP is bound at residue 15–18 (KLSG). Positions 23-28 (GAEGFG) are involved in allosteric activation by GTP. A UMP-binding site is contributed by Gly57. Gly58 and Arg62 together coordinate ATP. UMP contacts are provided by residues Asp77 and 138 to 145 (TGNPFFTT). Residues Thr165, Tyr171, and Asp174 each contribute to the ATP site.

The protein belongs to the UMP kinase family. Homohexamer.

It is found in the cytoplasm. The catalysed reaction is UMP + ATP = UDP + ADP. It functions in the pathway pyrimidine metabolism; CTP biosynthesis via de novo pathway; UDP from UMP (UMPK route): step 1/1. Its activity is regulated as follows. Allosterically activated by GTP. Inhibited by UTP. In terms of biological role, catalyzes the reversible phosphorylation of UMP to UDP. The sequence is that of Uridylate kinase from Yersinia enterocolitica serotype O:8 / biotype 1B (strain NCTC 13174 / 8081).